A 200-amino-acid chain; its full sequence is Membrane-spanning 4-domains subfamily A member 5 (200 aa).

Topologically, residues 1–52 are cytoplasmic; it reads MDSSTAHSPVFLVFPPEITASEYESTELSATTFSTQSPLQKLFARKMKILGT. The chain crosses the membrane as a helical span at residues 53-73; sequence IQILFGIMTFSFGVIFLFTLL. Residues 74–80 lie on the Extracellular side of the membrane; that stretch reads KPYPRFP. Residues 81-101 form a helical membrane-spanning segment; that stretch reads FIFLSGYPFWGSVLFINSGAF. The Cytoplasmic segment spans residues 102–120; the sequence is LIAVKRKTTETLIILSRIM. Residues 121–141 traverse the membrane as a helical segment; the sequence is NFLSALGAIAGIILLTFGFIL. At 142-159 the chain is on the extracellular side; that stretch reads DQNYICGYSHQNSQCKAV. A helical membrane pass occupies residues 160–180; sequence TVLFLGILITLMTFSIIELFI. The Cytoplasmic portion of the chain corresponds to 181–200; it reads SLPFSILGCHSEDCDCEQCC.

The protein belongs to the MS4A family. In terms of tissue distribution, expressed at high level in the testis. Detected also in the pancreas, heart and in the brain.

The protein resides in the membrane. In terms of biological role, may be involved in signal transduction as a component of a multimeric receptor complex. The polypeptide is Membrane-spanning 4-domains subfamily A member 5 (MS4A5) (Homo sapiens (Human)).